The sequence spans 186 residues: 19 kDa globulin (186 aa).

A signal peptide spans 1–22 (MASKVVFFAAALMAAMVAISGA). Residues 108 to 155 (PLEQGWSSSSSEYYGGEGSSSEQGYYGEGSSEEGYYGEQQQQPGMTRV) are disordered. Residues 110–149 (EQGWSSSSSEYYGGEGSSSEQGYYGEGSSEEGYYGEQQQQ) are compositionally biased toward low complexity.

Belongs to the 2S seed storage albumins family.

It localises to the secreted. In terms of biological role, seed storage protein. The sequence is that of 19 kDa globulin from Oryza sativa subsp. japonica (Rice).